The following is a 142-amino-acid chain: uncharacterized protein (142 aa).

Its subcellular location is the mitochondrion. This is an uncharacterized protein from Mus musculus (Mouse).